The sequence spans 66 residues: U10-theraphotoxin-Cg1a 1 (66 aa).

Positions 1–21 (MKTSVLFVIFGLALLFCLSFA) are cleaved as a signal peptide. Positions 22–29 (AELEDTGR) are excised as a propeptide. Cystine bridges form between C31/C46, C38/C51, and C45/C58.

The protein belongs to the neurotoxin 10 (Hwtx-1) family. 29 (Jztx-13) subfamily. As to expression, expressed by the venom gland.

It is found in the secreted. In terms of biological role, probable ion channel inhibitor. The protein is U10-theraphotoxin-Cg1a 1 of Chilobrachys guangxiensis (Chinese earth tiger tarantula).